Consider the following 658-residue polypeptide: CXXC-type zinc finger protein 1 (658 aa).

M1 is subject to N-acetylmethionine. Acidic residues predominate over residues M1 to G14. The segment at M1–E20 is disordered. Phosphoserine occurs at positions 6 and 19. The segment at Y28 to K76 adopts a PHD-type zinc-finger fold. Positions Y84–I164 are disordered. A compositionally biased stretch (basic and acidic residues) spans R90–R120. The span at Q153–Q163 shows a compositional bias: low complexity. The segment at Q162–Q211 adopts a CXXC-type zinc-finger fold. C171, C174, C177, C183, C186, C189, C205, and C210 together coordinate Zn(2+). 2 disordered regions span residues F221 to D285 and V327 to S373. Position 226 is a phosphoserine (S226). At T229 the chain carries Phosphothreonine. K252 participates in a covalent cross-link: Glycyl lysine isopeptide (Lys-Gly) (interchain with G-Cter in SUMO2). Residues V327–E336 show a composition bias toward basic residues. Residues K337–Y347 show a composition bias toward basic and acidic residues. Positions K348 to W360 are enriched in basic residues. Residues K361–D370 are compositionally biased toward basic and acidic residues. Residues G428–E470 are a coiled coil.

Component of the SET1 complex, at least composed of the catalytic subunit (SETD1A or SETD1B), WDR5, WDR82, RBBP5, ASH2L/ASH2, CXXC1/CFP1, HCFC1 and DPY30. Interacts with SETD1A. Interacts with ZNF335. Interacts with PRDM9; this interaction does not link PRDM9-activated recombination hotspot sites with DSB machinery and is not required for the hotspot recognition pathway. Interacts with histone H3K4me3. May be regulated by proteolysis.

Its subcellular location is the nucleus speckle. The protein localises to the nucleus. In terms of biological role, transcriptional activator that exhibits a unique DNA binding specificity for CpG unmethylated motifs with a preference for CpGG. The protein is CXXC-type zinc finger protein 1 (CXXC1) of Bos taurus (Bovine).